We begin with the raw amino-acid sequence, 438 residues long: Na(+)/H(+) antiporter NhaA (438 aa).

11 helical membrane passes run Phe23–Leu43, Phe62–Leu82, Ser104–Leu124, Gly133–Gly153, Val162–Phe182, Thr185–Leu205, Val221–Leu241, Phe302–Val322, Leu337–Ile357, Trp372–Ile392, and Ile410–Leu430.

The protein belongs to the NhaA Na(+)/H(+) (TC 2.A.33) antiporter family.

It localises to the cell inner membrane. The enzyme catalyses Na(+)(in) + 2 H(+)(out) = Na(+)(out) + 2 H(+)(in). Na(+)/H(+) antiporter that extrudes sodium in exchange for external protons. This is Na(+)/H(+) antiporter NhaA from Helicobacter pylori (strain HPAG1).